A 206-amino-acid chain; its full sequence is Ribosomal RNA small subunit methyltransferase G (206 aa).

S-adenosyl-L-methionine contacts are provided by residues Gly74, Leu79, 125–126 (VE), and Arg140.

This sequence belongs to the methyltransferase superfamily. RNA methyltransferase RsmG family.

Its subcellular location is the cytoplasm. It carries out the reaction guanosine(527) in 16S rRNA + S-adenosyl-L-methionine = N(7)-methylguanosine(527) in 16S rRNA + S-adenosyl-L-homocysteine. Functionally, specifically methylates the N7 position of guanine in position 527 of 16S rRNA. This is Ribosomal RNA small subunit methyltransferase G from Shewanella frigidimarina (strain NCIMB 400).